Reading from the N-terminus, the 343-residue chain is Small ribosomal subunit biogenesis GTPase RsgA (343 aa).

Positions arginine 116–phenylalanine 275 constitute a CP-type G domain. GTP is bound by residues asparagine 163–aspartate 166 and glycine 217–serine 225. Zn(2+) contacts are provided by cysteine 299, cysteine 304, histidine 306, and cysteine 312.

This sequence belongs to the TRAFAC class YlqF/YawG GTPase family. RsgA subfamily. As to quaternary structure, monomer. Associates with 30S ribosomal subunit, binds 16S rRNA. It depends on Zn(2+) as a cofactor.

Its subcellular location is the cytoplasm. One of several proteins that assist in the late maturation steps of the functional core of the 30S ribosomal subunit. Helps release RbfA from mature subunits. May play a role in the assembly of ribosomal proteins into the subunit. Circularly permuted GTPase that catalyzes slow GTP hydrolysis, GTPase activity is stimulated by the 30S ribosomal subunit. In Pseudomonas syringae pv. tomato (strain ATCC BAA-871 / DC3000), this protein is Small ribosomal subunit biogenesis GTPase RsgA.